Consider the following 908-residue polypeptide: Glutamate receptor ionotropic, kainate 2 (908 aa).

The N-terminal stretch at 1–31 (MQRIAGITKMVTHRRWLGLLLLLLCVGYSHG) is a signal peptide. The Extracellular segment spans residues 32-561 (MPHVLRFGGI…VFSFLNPLSP (530 aa)). 7 N-linked (GlcNAc...) asparagine glycosylation sites follow: asparagine 67, asparagine 73, asparagine 275, asparagine 378, asparagine 412, asparagine 423, and asparagine 430. Cysteine 96 and cysteine 347 are joined by a disulfide. Residues proline 516, alanine 518, and arginine 523 each coordinate L-glutamate. N-linked (GlcNAc...) asparagine glycosylation is present at asparagine 546. Residues 562–582 (DIWMYILLAYLGVSCVLFVIA) form a helical membrane-spanning segment. The Cytoplasmic segment spans residues 583 to 638 (RFSPYEWYNPHPCNPDSDVVENNFTLLNSFWFGVGALMQQGSELMPKALSTRIVGG). Residues 639–659 (IWWFFTLIIISSYTANLAAFL) traverse the membrane as a helical segment. The Extracellular portion of the chain corresponds to 660-819 (TVERMESPID…KEASALGVQN (160 aa)). L-glutamate is bound by residues serine 689, threonine 690, and glutamate 738. An intrachain disulfide couples cysteine 750 to cysteine 804. Residue asparagine 751 is glycosylated (N-linked (GlcNAc...) asparagine). A helical membrane pass occupies residues 820–840 (IGGIFIVLAAGLVLSVFVAVG). At 841–908 (EFLYKSKQNA…RRLPGKETMA (68 aa)) the chain is on the cytoplasmic side.

It belongs to the glutamate-gated ion channel (TC 1.A.10.1) family. GRIK2 subfamily. Homotetramer and heterotetramer with GRIK5. Tetramers may be formed by the dimerization of dimers.

It is found in the cell membrane. It localises to the postsynaptic cell membrane. The enzyme catalyses Ca(2+)(in) = Ca(2+)(out). The catalysed reaction is Na(+)(in) = Na(+)(out). Its activity is regulated as follows. Cold receptor activity activated by temperatures between 10-19 degrees Celsius. In terms of biological role, ionotropic glutamate receptor that functions as a cation-permeable ligand-gated ion channel, gated by L-glutamate and the glutamatergic agonist kainic acid. L-glutamate acts as an excitatory neurotransmitter at many synapses in the central nervous system. Binding of the excitatory neurotransmitter L-glutamate induces a conformation change, leading to the opening of the cation channel, and thereby converts the chemical signal to an electrical impulse. The receptor then desensitizes rapidly and enters a transient inactive state, characterized by the presence of bound agonist. Its function is as follows. Independent of its ionotropic glutamate receptor activity, acts as a thermoreceptor conferring sensitivity to cold temperatures. Functions in dorsal root ganglion neurons. This Danio rerio (Zebrafish) protein is Glutamate receptor ionotropic, kainate 2.